Consider the following 270-residue polypeptide: Shikimate dehydrogenase (NADP(+)) (270 aa).

Residues 15-17 and Thr62 each bind shikimate; that span reads SLS. Residue Lys66 is the Proton acceptor of the active site. 2 residues coordinate shikimate: Asn87 and Asp102. Residues 126 to 130, 149 to 154, and Ile210 contribute to the NADP(+) site; these read GAGGS and NRTVGR. Tyr212 is a shikimate binding site. Gly233 is an NADP(+) binding site.

This sequence belongs to the shikimate dehydrogenase family. As to quaternary structure, homodimer.

The catalysed reaction is shikimate + NADP(+) = 3-dehydroshikimate + NADPH + H(+). It participates in metabolic intermediate biosynthesis; chorismate biosynthesis; chorismate from D-erythrose 4-phosphate and phosphoenolpyruvate: step 4/7. Involved in the biosynthesis of the chorismate, which leads to the biosynthesis of aromatic amino acids. Catalyzes the reversible NADPH linked reduction of 3-dehydroshikimate (DHSA) to yield shikimate (SA). In Hyphomonas neptunium (strain ATCC 15444), this protein is Shikimate dehydrogenase (NADP(+)).